The following is a 448-amino-acid chain: Trigger factor (448 aa).

One can recognise a PPIase FKBP-type domain in the interval 162–243; that stretch reads GDFVQIDLNA…VRTVKEKELP (82 aa).

The protein belongs to the FKBP-type PPIase family. Tig subfamily.

It is found in the cytoplasm. It carries out the reaction [protein]-peptidylproline (omega=180) = [protein]-peptidylproline (omega=0). Functionally, involved in protein export. Acts as a chaperone by maintaining the newly synthesized protein in an open conformation. Functions as a peptidyl-prolyl cis-trans isomerase. This chain is Trigger factor, found in Salinispora arenicola (strain CNS-205).